A 152-amino-acid polypeptide reads, in one-letter code: Cytosolic calcium-binding protein 1 (152 aa).

A run of 7 repeats spans residues 57–62 (VEETEK), 67–71 (TEEAQ), 78–82 (VEIKK), 104–108 (VEAKK), 112–116 (VEEKK), 124–129 (VEEEKK), and 131–136 (EAEEEK). A 7 X 5 AA approximate repeats of V-E-E-K-K region spans residues 57-136 (VEETEKPIEE…EKKPEAEEEK (80 aa)). The segment at 60–152 (TEKPIEETEE…VTAPVEKADE (93 aa)) is disordered. Basic and acidic residues predominate over residues 96–138 (DESKTEEVVEAKKEEEVEEKKTEEAPVVVEEEKKPEAEEEKPA).

As to expression, predominantly expressed in petioles (at protein level). Mainly observed in shoots, flowers, siliques and roots, and, to a lower extent, in stems and leaves.

The protein localises to the cytoplasm. The protein resides in the cytosol. Functionally, binds calcium Ca(2+) and may act as a signal mediator to buffer Ca(2+). The protein is Cytosolic calcium-binding protein 1 of Arabidopsis thaliana (Mouse-ear cress).